The sequence spans 251 residues: Imidazole glycerol phosphate synthase subunit HisF (251 aa).

Residues aspartate 11 and aspartate 130 contribute to the active site.

Belongs to the HisA/HisF family. In terms of assembly, heterodimer of HisH and HisF.

It is found in the cytoplasm. The catalysed reaction is 5-[(5-phospho-1-deoxy-D-ribulos-1-ylimino)methylamino]-1-(5-phospho-beta-D-ribosyl)imidazole-4-carboxamide + L-glutamine = D-erythro-1-(imidazol-4-yl)glycerol 3-phosphate + 5-amino-1-(5-phospho-beta-D-ribosyl)imidazole-4-carboxamide + L-glutamate + H(+). It functions in the pathway amino-acid biosynthesis; L-histidine biosynthesis; L-histidine from 5-phospho-alpha-D-ribose 1-diphosphate: step 5/9. Its function is as follows. IGPS catalyzes the conversion of PRFAR and glutamine to IGP, AICAR and glutamate. The HisF subunit catalyzes the cyclization activity that produces IGP and AICAR from PRFAR using the ammonia provided by the HisH subunit. In Pelodictyon phaeoclathratiforme (strain DSM 5477 / BU-1), this protein is Imidazole glycerol phosphate synthase subunit HisF.